Reading from the N-terminus, the 596-residue chain is Uptake hydrogenase large subunit (596 aa).

Residues cysteine 75, cysteine 78, cysteine 575, and cysteine 578 each coordinate Ni(2+).

Belongs to the [NiFe]/[NiFeSe] hydrogenase large subunit family. In terms of assembly, heterodimer of a large and a small subunit. The cofactor is Ni(2+).

Its subcellular location is the cell membrane. The catalysed reaction is H2 + A = AH2. In terms of biological role, this enzyme recycles the H(2) produced by nitrogenase to increase the production of ATP and to protect nitrogenase against inhibition or damage by O(2) under carbon- or phosphate-limited conditions. In Bradyrhizobium diazoefficiens (strain JCM 10833 / BCRC 13528 / IAM 13628 / NBRC 14792 / USDA 110), this protein is Uptake hydrogenase large subunit (hupB).